The chain runs to 1148 residues: Pyruvate carboxylase (1148 aa).

The Biotin carboxylation domain maps to 1–457 (MSQQSIQKVL…DTSFIDTTPE (457 aa)). ATP is bound by residues Lys121, Glu205, and His240. The region spanning 125 to 321 (REQAEKAGIP…IVQTQILVAQ (197 aa)) is the ATP-grasp domain. Residue Lys242 is part of the active site. A Pyruvate carboxyltransferase domain is found at 534-802 (VLLTDTTFRD…RPEMNVQGVE (269 aa)). Residues 542–546 (RDAHQ) and Arg615 each bind substrate. Asp543 serves as a coordination point for a divalent metal cation. Residues Lys712, His741, and His743 each contribute to the a divalent metal cation site. The residue at position 712 (Lys712) is an N6-carboxylysine. A substrate-binding site is contributed by Thr876. Positions 1071–1146 (KADRTNPSHI…QTGDLLLEIE (76 aa)) constitute a Biotinyl-binding domain. Position 1112 is an N6-biotinyllysine (Lys1112).

In terms of assembly, homotetramer. At very low potassium concentrations, when intracellular levels of c-di-AMP are low, interacts with apo-DarB. c-di-AMP inhibits the binding of DarB to PYC. Does not bind directly c-di-AMP. The cofactor is biotin.

It catalyses the reaction hydrogencarbonate + pyruvate + ATP = oxaloacetate + ADP + phosphate + H(+). Its activity is regulated as follows. Activated by the cyclic di-AMP (c-di-AMP) receptor DarB in the absence of c-di-AMP. Allosterically activated by acetyl-CoA. Inhibited by the biotin-complexing protein avidin. Functionally, catalyzes a 2-step reaction, involving the ATP-dependent carboxylation of the covalently attached biotin in the first step and the transfer of the carboxyl group to pyruvate in the second, leading to oxaloacetate production. Fulfills an anaplerotic function in B.subtilis as it is necessary for growth on glucose, but is not required for sporulation. The polypeptide is Pyruvate carboxylase (pyc) (Bacillus subtilis (strain 168)).